Here is a 230-residue protein sequence, read N- to C-terminus: RNA-binding protein 24 (230 aa).

The 78-residue stretch at 11–88 (TKIFVGGLPY…RKANVNLAYL (78 aa)) folds into the RRM domain.

It localises to the nucleus. It is found in the cytoplasm. Multifunctional RNA-binding protein involved in the regulation of pre-mRNA splicing, mRNA stability and mRNA translation important for cell fate decision and differentiation. Plays a major role in pre-mRNA alternative splicing regulation. Mediates preferentially muscle-specific exon inclusion in numerous mRNAs important for striated cardiac and skeletal muscle cell differentiation. Binds to intronic splicing enhancer (ISE) composed of stretches of GU-rich motifs localized in flanking intron of exon that will be included by alternative splicing. Involved in embryonic stem cell (ESC) transition to cardiac cell differentiation by promoting pre-mRNA alternative splicing events of several pluripotency and/or differentiation genes. Plays a role in the regulation of mRNA stability and mRNA translation to which it is bound. Involved in myogenic differentiation by regulating myog levels. Binds to a huge amount of mRNAs. Required for embryonic heart development, sarcomer and M-band formation in striated muscles. This chain is RNA-binding protein 24 (rbm24), found in Danio rerio (Zebrafish).